A 164-amino-acid polypeptide reads, in one-letter code: S-ribosylhomocysteine lyase (164 aa).

H54, H58, and C128 together coordinate Fe cation.

This sequence belongs to the LuxS family. In terms of assembly, homodimer. Requires Fe cation as cofactor.

It carries out the reaction S-(5-deoxy-D-ribos-5-yl)-L-homocysteine = (S)-4,5-dihydroxypentane-2,3-dione + L-homocysteine. Its function is as follows. Involved in the synthesis of autoinducer 2 (AI-2) which is secreted by bacteria and is used to communicate both the cell density and the metabolic potential of the environment. The regulation of gene expression in response to changes in cell density is called quorum sensing. Catalyzes the transformation of S-ribosylhomocysteine (RHC) to homocysteine (HC) and 4,5-dihydroxy-2,3-pentadione (DPD). The polypeptide is S-ribosylhomocysteine lyase (Campylobacter jejuni subsp. jejuni serotype O:23/36 (strain 81-176)).